The primary structure comprises 88 residues: Small ribosomal subunit protein bS21 (88 aa).

Residues 58 to 88 are disordered; that stretch reads ARKRAQREGLLPMTPRPVAAGGAAGAARPPR. Positions 73 to 88 are enriched in low complexity; sequence RPVAAGGAAGAARPPR.

Belongs to the bacterial ribosomal protein bS21 family.

This is Small ribosomal subunit protein bS21 from Mesorhizobium japonicum (strain LMG 29417 / CECT 9101 / MAFF 303099) (Mesorhizobium loti (strain MAFF 303099)).